The chain runs to 428 residues: Adenylosuccinate synthetase (428 aa).

GTP contacts are provided by residues 12–18 (GDEGKGK) and 40–42 (GHT). D13 serves as the catalytic Proton acceptor. Mg(2+) contacts are provided by D13 and G40. IMP contacts are provided by residues 13–16 (DEGK), 38–41 (NAGH), T130, R144, Q225, T240, and R304. H41 serves as the catalytic Proton donor. 300–306 (TTTGRPR) provides a ligand contact to substrate. GTP contacts are provided by residues R306, 332–334 (KLD), and 414–416 (SVG).

The protein belongs to the adenylosuccinate synthetase family. In terms of assembly, homodimer. Mg(2+) is required as a cofactor.

The protein localises to the cytoplasm. It carries out the reaction IMP + L-aspartate + GTP = N(6)-(1,2-dicarboxyethyl)-AMP + GDP + phosphate + 2 H(+). It participates in purine metabolism; AMP biosynthesis via de novo pathway; AMP from IMP: step 1/2. Plays an important role in the de novo pathway of purine nucleotide biosynthesis. Catalyzes the first committed step in the biosynthesis of AMP from IMP. The polypeptide is Adenylosuccinate synthetase (Caldanaerobacter subterraneus subsp. tengcongensis (strain DSM 15242 / JCM 11007 / NBRC 100824 / MB4) (Thermoanaerobacter tengcongensis)).